Reading from the N-terminus, the 475-residue chain is ATP synthase subunit beta, chloroplastic (475 aa).

156 to 163 provides a ligand contact to ATP; the sequence is GGAGVGKT.

Belongs to the ATPase alpha/beta chains family. As to quaternary structure, F-type ATPases have 2 components, CF(1) - the catalytic core - and CF(0) - the membrane proton channel. CF(1) has five subunits: alpha(3), beta(3), gamma(1), delta(1), epsilon(1). CF(0) has four main subunits: a(1), b(1), b'(1) and c(9-12).

The protein localises to the plastid. It is found in the chloroplast thylakoid membrane. The enzyme catalyses ATP + H2O + 4 H(+)(in) = ADP + phosphate + 5 H(+)(out). Its function is as follows. Produces ATP from ADP in the presence of a proton gradient across the membrane. The catalytic sites are hosted primarily by the beta subunits. The chain is ATP synthase subunit beta, chloroplastic from Gracilaria tenuistipitata var. liui (Red alga).